Here is a 624-residue protein sequence, read N- to C-terminus: Actin-related protein 8 (624 aa).

Methionine 1 bears the N-acetylmethionine mark. The span at 1-25 (MTQAEKGDAENGKEKGGEKEKEQRG) shows a compositional bias: basic and acidic residues. A disordered region spans residues 1-29 (MTQAEKGDAENGKEKGGEKEKEQRGVKRP). Residues serine 55 and threonine 56 each contribute to the ATP site. Serine 132 carries the phosphoserine modification. 283-286 (DVGD) serves as a coordination point for ATP. Serine 412 is modified (phosphoserine). The disordered stretch occupies residues 430 to 460 (SKQEQSAKATADRKSASKPIGFEGDLRGQSS).

Belongs to the actin family. ARP8 subfamily. As to quaternary structure, component of the chromatin remodeling INO80 complex; specifically part of a complex module associated with the DBINO domain of INO80. Exists as monomers and dimers, but the dimer is most probably the biologically relevant form required for stable interactions with histones that exploits the twofold symmetry of the nucleosome core.

Its subcellular location is the nucleus. The protein localises to the chromosome. Plays an important role in the functional organization of mitotic chromosomes. Exhibits low basal ATPase activity, and unable to polymerize. In terms of biological role, proposed core component of the chromatin remodeling INO80 complex which is involved in transcriptional regulation, DNA replication and probably DNA repair. Required for the recruitment of INO80 (and probably the INO80 complex) to sites of DNA damage Strongly prefer nucleosomes and H3-H4 tetramers over H2A-H2B dimers, suggesting it may act as a nucleosome recognition module within the complex. In Ailuropoda melanoleuca (Giant panda), this protein is Actin-related protein 8 (ACTR8).